The chain runs to 337 residues: Anthranilate phosphoribosyltransferase (337 aa).

Residues Gly-81, 84-85 (GD), Ser-89, 91-94 (NVST), 109-117 (KHGNRAATS), and Ala-121 contribute to the 5-phospho-alpha-D-ribose 1-diphosphate site. Residue Gly-81 participates in anthranilate binding. Ser-93 contacts Mg(2+). Asn-112 lines the anthranilate pocket. An anthranilate-binding site is contributed by Arg-167. Positions 226 and 227 each coordinate Mg(2+).

It belongs to the anthranilate phosphoribosyltransferase family. In terms of assembly, homodimer. Mg(2+) is required as a cofactor.

The catalysed reaction is N-(5-phospho-beta-D-ribosyl)anthranilate + diphosphate = 5-phospho-alpha-D-ribose 1-diphosphate + anthranilate. Its pathway is amino-acid biosynthesis; L-tryptophan biosynthesis; L-tryptophan from chorismate: step 2/5. Catalyzes the transfer of the phosphoribosyl group of 5-phosphorylribose-1-pyrophosphate (PRPP) to anthranilate to yield N-(5'-phosphoribosyl)-anthranilate (PRA). In Methylorubrum extorquens (strain PA1) (Methylobacterium extorquens), this protein is Anthranilate phosphoribosyltransferase.